A 256-amino-acid polypeptide reads, in one-letter code: Ubiquinone/menaquinone biosynthesis C-methyltransferase UbiE (256 aa).

Over residues 1–12 the composition is skewed to basic and acidic residues; the sequence is MNDQRKGDHAEP. A disordered region spans residues 1-23; the sequence is MNDQRKGDHAEPTTHFGYQDVPE. S-adenosyl-L-methionine contacts are provided by residues T79, D100, and 128–129; that span reads DA.

This sequence belongs to the class I-like SAM-binding methyltransferase superfamily. MenG/UbiE family.

The catalysed reaction is a 2-demethylmenaquinol + S-adenosyl-L-methionine = a menaquinol + S-adenosyl-L-homocysteine + H(+). It carries out the reaction a 2-methoxy-6-(all-trans-polyprenyl)benzene-1,4-diol + S-adenosyl-L-methionine = a 5-methoxy-2-methyl-3-(all-trans-polyprenyl)benzene-1,4-diol + S-adenosyl-L-homocysteine + H(+). The protein operates within quinol/quinone metabolism; menaquinone biosynthesis; menaquinol from 1,4-dihydroxy-2-naphthoate: step 2/2. It functions in the pathway cofactor biosynthesis; ubiquinone biosynthesis. In terms of biological role, methyltransferase required for the conversion of demethylmenaquinol (DMKH2) to menaquinol (MKH2) and the conversion of 2-polyprenyl-6-methoxy-1,4-benzoquinol (DDMQH2) to 2-polyprenyl-3-methyl-6-methoxy-1,4-benzoquinol (DMQH2). In Pseudomonas putida (strain ATCC 700007 / DSM 6899 / JCM 31910 / BCRC 17059 / LMG 24140 / F1), this protein is Ubiquinone/menaquinone biosynthesis C-methyltransferase UbiE.